Consider the following 163-residue polypeptide: Cyclic pyranopterin monophosphate synthase (163 aa).

Substrate-binding positions include 75–77 and 113–114; these read LCH and ME. The active site involves D128.

It belongs to the MoaC family. As to quaternary structure, homohexamer; trimer of dimers.

The catalysed reaction is (8S)-3',8-cyclo-7,8-dihydroguanosine 5'-triphosphate = cyclic pyranopterin phosphate + diphosphate. It participates in cofactor biosynthesis; molybdopterin biosynthesis. Functionally, catalyzes the conversion of (8S)-3',8-cyclo-7,8-dihydroguanosine 5'-triphosphate to cyclic pyranopterin monophosphate (cPMP). The sequence is that of Cyclic pyranopterin monophosphate synthase from Magnetococcus marinus (strain ATCC BAA-1437 / JCM 17883 / MC-1).